Here is a 336-residue protein sequence, read N- to C-terminus: 4-hydroxythreonine-4-phosphate dehydrogenase (336 aa).

Residues His-135 and Thr-136 each contribute to the substrate site. A divalent metal cation-binding residues include His-165, His-210, and His-265. Substrate-binding residues include Lys-273, Asn-282, and Arg-291.

Belongs to the PdxA family. As to quaternary structure, homodimer. Requires Zn(2+) as cofactor. It depends on Mg(2+) as a cofactor. Co(2+) serves as cofactor.

The protein resides in the cytoplasm. It carries out the reaction 4-(phosphooxy)-L-threonine + NAD(+) = 3-amino-2-oxopropyl phosphate + CO2 + NADH. It functions in the pathway cofactor biosynthesis; pyridoxine 5'-phosphate biosynthesis; pyridoxine 5'-phosphate from D-erythrose 4-phosphate: step 4/5. Its function is as follows. Catalyzes the NAD(P)-dependent oxidation of 4-(phosphooxy)-L-threonine (HTP) into 2-amino-3-oxo-4-(phosphooxy)butyric acid which spontaneously decarboxylates to form 3-amino-2-oxopropyl phosphate (AHAP). The chain is 4-hydroxythreonine-4-phosphate dehydrogenase from Marinobacter nauticus (strain ATCC 700491 / DSM 11845 / VT8) (Marinobacter aquaeolei).